A 138-amino-acid polypeptide reads, in one-letter code: Acidic phospholipase A2 PL1 (138 aa).

The first 16 residues, 1–16 (MRALWIVAVCLIGAEG), serve as a signal peptide directing secretion. 7 disulfide bridges follow: Cys-42/Cys-131, Cys-44/Cys-60, Cys-59/Cys-111, Cys-65/Cys-138, Cys-66/Cys-104, Cys-73/Cys-97, and Cys-91/Cys-102. Ca(2+) contacts are provided by Tyr-43, Gly-45, and Gly-47. Residue His-63 is part of the active site. A Ca(2+)-binding site is contributed by Asp-64. Asp-105 is a catalytic residue.

The protein belongs to the phospholipase A2 family. Group II subfamily. D49 sub-subfamily. Ca(2+) is required as a cofactor. As to expression, expressed by the venom gland.

It is found in the secreted. The catalysed reaction is a 1,2-diacyl-sn-glycero-3-phosphocholine + H2O = a 1-acyl-sn-glycero-3-phosphocholine + a fatty acid + H(+). Functionally, PLA2 catalyzes the calcium-dependent hydrolysis of the 2-acyl groups in 3-sn-phosphoglycerides. The sequence is that of Acidic phospholipase A2 PL1 from Vipera renardi (Steppe viper).